We begin with the raw amino-acid sequence, 608 residues long: Epsin-3 (608 aa).

The a 1,2-diacyl-sn-glycero-3-phospho-(1D-myo-inositol-4,5-bisphosphate) site is built by Arg-8, Lys-11, Arg-25, Asn-30, Arg-63, and His-73. The region spanning Asn-12–Arg-144 is the ENTH domain. 2 disordered regions span residues Thr-150–Ile-266 and Ser-281–Ala-475. A compositionally biased stretch (low complexity) spans Gly-174–Ala-189. Residues Ser-184 and Ser-185 each carry the phosphoserine modification. The region spanning Glu-202–Gly-221 is the UIM domain. 2 stretches are compositionally biased toward basic and acidic residues: residues Ser-214 to Asp-229 and Gly-240 to Lys-260. 7 repeat units span residues Asp-287–Trp-289, Asp-310–Trp-312, Glu-337–Trp-339, Asp-353–Trp-355, Asp-370–Trp-372, Asn-495–Phe-497, and Asn-508–Phe-510. Positions Asp-287–Trp-372 are 5 X 3 AA repeats of [DE]-P-W. Over residues Pro-346–Lys-363 the composition is skewed to pro residues. The segment at Asn-495–Phe-607 is 3 X 3 AA repeats of N-P-F. 2 disordered regions span residues Leu-498–Leu-530 and Gly-575–Leu-608. The segment covering Ala-578–Leu-588 has biased composition (pro residues). Residues Asn-605–Phe-607 form repeat 3.

It belongs to the epsin family.

It is found in the cytoplasm. It localises to the cell cortex. The protein resides in the perinuclear region. The protein localises to the cytoplasmic vesicle. Its subcellular location is the clathrin-coated vesicle. It is found in the nucleus. This chain is Epsin-3 (Epn3), found in Rattus norvegicus (Rat).